A 406-amino-acid chain; its full sequence is Succinylornithine transaminase (406 aa).

The residue at position 252 (K252) is an N6-(pyridoxal phosphate)lysine.

This sequence belongs to the class-III pyridoxal-phosphate-dependent aminotransferase family. AstC subfamily. Requires pyridoxal 5'-phosphate as cofactor.

It carries out the reaction N(2)-succinyl-L-ornithine + 2-oxoglutarate = N-succinyl-L-glutamate 5-semialdehyde + L-glutamate. It participates in amino-acid degradation; L-arginine degradation via AST pathway; L-glutamate and succinate from L-arginine: step 3/5. Catalyzes the transamination of N(2)-succinylornithine and alpha-ketoglutarate into N(2)-succinylglutamate semialdehyde and glutamate. Can also act as an acetylornithine aminotransferase. This Escherichia fergusonii (strain ATCC 35469 / DSM 13698 / CCUG 18766 / IAM 14443 / JCM 21226 / LMG 7866 / NBRC 102419 / NCTC 12128 / CDC 0568-73) protein is Succinylornithine transaminase.